The following is a 295-amino-acid chain: uncharacterized protein (295 aa).

Positions 1 to 19 (MRKLLLIITVFFTFNVAQA) are cleaved as a signal peptide.

This is an uncharacterized protein from Rickettsia conorii (strain ATCC VR-613 / Malish 7).